The primary structure comprises 874 residues: Alanine--tRNA ligase (874 aa).

Zn(2+) is bound by residues His-564, His-568, Cys-665, and His-669.

The protein belongs to the class-II aminoacyl-tRNA synthetase family. Zn(2+) serves as cofactor.

Its subcellular location is the cytoplasm. The catalysed reaction is tRNA(Ala) + L-alanine + ATP = L-alanyl-tRNA(Ala) + AMP + diphosphate. Its function is as follows. Catalyzes the attachment of alanine to tRNA(Ala) in a two-step reaction: alanine is first activated by ATP to form Ala-AMP and then transferred to the acceptor end of tRNA(Ala). Also edits incorrectly charged Ser-tRNA(Ala) and Gly-tRNA(Ala) via its editing domain. This is Alanine--tRNA ligase from Paraburkholderia xenovorans (strain LB400).